The primary structure comprises 437 residues: GTPase Obg (437 aa).

Positions 2-160 constitute an Obg domain; the sequence is SMFLDTAKIK…RNLELELKVL (159 aa). The OBG-type G domain maps to 161–338; it reads ADVGLVGFPS…LLEATAELLE (178 aa). Residues 167–174, 192–196, 214–217, 284–287, and 319–321 each bind GTP; these read GFPSVGKS, FTTIV, DLPG, NKMD, and SGI. Mg(2+) is bound by residues Ser174 and Thr194. Residues 359–437 form the OCT domain; the sequence is GFNPDEPEFA…IGKFEFEFVD (79 aa).

Belongs to the TRAFAC class OBG-HflX-like GTPase superfamily. OBG GTPase family. As to quaternary structure, monomer. It depends on Mg(2+) as a cofactor.

The protein localises to the cytoplasm. Its function is as follows. An essential GTPase which binds GTP, GDP and possibly (p)ppGpp with moderate affinity, with high nucleotide exchange rates and a fairly low GTP hydrolysis rate. Plays a role in control of the cell cycle, stress response, ribosome biogenesis and in those bacteria that undergo differentiation, in morphogenesis control. This Streptococcus suis (strain 98HAH33) protein is GTPase Obg.